The following is a 330-amino-acid chain: Nitrilase 3 (330 aa).

The CN hydrolase domain occupies Val4–Phe273. Glu44 (proton acceptor) is an active-site residue. Lys128 (proton donor) is an active-site residue. The active-site Nucleophile is the Cys162. The tract at residues Arg310 to Ala330 is disordered.

It belongs to the carbon-nitrogen hydrolase superfamily. Nitrilase family.

The enzyme catalyses a nitrile + 2 H2O = a carboxylate + NH4(+). Functionally, nitrilases catalyze the mild hydrolytic conversion of organonitriles directly to the corresponding carboxylic acids. The protein is Nitrilase 3 of Unknown prokaryotic organism.